Reading from the N-terminus, the 727-residue chain is Prolyl endopeptidase-like (727 aa).

Residues Ser-559, Asp-645, and His-690 each act as charge relay system in the active site.

The protein belongs to the peptidase S9A family. As to quaternary structure, homodimer. Interacts with the AP-1 complex.

Its subcellular location is the cytoplasm. The protein localises to the cytosol. The protein resides in the golgi apparatus. It localises to the trans-Golgi network. It is found in the cytoskeleton. Its subcellular location is the nucleus. Serine peptidase whose precise substrate specificity remains unclear. Does not cleave peptides after a arginine or lysine residue. Regulates trans-Golgi network morphology and sorting by regulating the membrane binding of the AP-1 complex. May play a role in the regulation of synaptic vesicle exocytosis. The protein is Prolyl endopeptidase-like (PREPL) of Macaca fascicularis (Crab-eating macaque).